Reading from the N-terminus, the 359-residue chain is DNA polymerase IV (359 aa).

A UmuC domain is found at isoleucine 4–glycine 184. Residues aspartate 8 and aspartate 102 each coordinate Mg(2+). Glutamate 103 is a catalytic residue.

Belongs to the DNA polymerase type-Y family. As to quaternary structure, monomer. Requires Mg(2+) as cofactor.

Its subcellular location is the cytoplasm. The catalysed reaction is DNA(n) + a 2'-deoxyribonucleoside 5'-triphosphate = DNA(n+1) + diphosphate. In terms of biological role, poorly processive, error-prone DNA polymerase involved in untargeted mutagenesis. Copies undamaged DNA at stalled replication forks, which arise in vivo from mismatched or misaligned primer ends. These misaligned primers can be extended by PolIV. Exhibits no 3'-5' exonuclease (proofreading) activity. May be involved in translesional synthesis, in conjunction with the beta clamp from PolIII. In Xanthomonas euvesicatoria pv. vesicatoria (strain 85-10) (Xanthomonas campestris pv. vesicatoria), this protein is DNA polymerase IV.